A 223-amino-acid polypeptide reads, in one-letter code: 7-cyano-7-deazaguanine synthase (223 aa).

10–20 provides a ligand contact to ATP; that stretch reads FSGGQDSTTCL. Residues cysteine 188, cysteine 197, cysteine 200, and cysteine 203 each contribute to the Zn(2+) site.

The protein belongs to the QueC family. Zn(2+) is required as a cofactor.

It catalyses the reaction 7-carboxy-7-deazaguanine + NH4(+) + ATP = 7-cyano-7-deazaguanine + ADP + phosphate + H2O + H(+). The protein operates within purine metabolism; 7-cyano-7-deazaguanine biosynthesis. Catalyzes the ATP-dependent conversion of 7-carboxy-7-deazaguanine (CDG) to 7-cyano-7-deazaguanine (preQ(0)). This chain is 7-cyano-7-deazaguanine synthase, found in Phocaeicola vulgatus (strain ATCC 8482 / DSM 1447 / JCM 5826 / CCUG 4940 / NBRC 14291 / NCTC 11154) (Bacteroides vulgatus).